Reading from the N-terminus, the 373-residue chain is MASFLVLAFSLAFVSQTTANYFYSSPPPPVKHYSPPPVYKSPPPPVKHYSPPPVYKSPPPPVKHYSPPPVYKSPPPPVKYYSPPPVYKSPPPPVYKSPPPPVKHYSPPPVYKSPPPPVKHYSPPPVYKSPPPPVKHYSPPPVYKSPPPPVKHYSPPPVYKSPPPPVKYYSPPPVYKSPPPPVKHYSPPPVYKSPPPPVKYYSPPPVYKSPPPPVKHYSPPPVYKSPPPPVKYYSPPPVYKSPPPPVHYSPPPVVYHSPPPPVHYSPPPVVYHSPPPPVHYSPPPVVYHSPPPPVHYSPPPVVYHSPPPPVHYSPPPVVYHSPPPPKKHYEYKSPPPPVHYSPPTVYHSPPPPVHHYSPPHQPYLYKSPPPPHY.

A signal peptide spans Met1–Ala19. Repeat copies occupy residues Ser25–Tyr33, Ser34–Lys40, Ser41–Tyr49, Ser50–Lys56, Ser57–Tyr65, Ser66–Lys72, Ser73–Tyr81, Ser82–Lys88, Ser97–Tyr105, Ser106–Lys112, Ser113–Tyr121, Ser122–Lys128, Ser129–Tyr137, Ser138–Lys144, Ser145–Tyr153, Ser154–Lys160, Ser161–Tyr169, Ser170–Lys176, Ser177–Tyr185, Ser186–Lys192, Ser193–Tyr201, Ser202–Lys208, Ser209–Tyr217, Ser218–Lys224, Ser225–Tyr233, Ser234–Lys240, Ser241–Tyr248, Ser249–His256, Ser257–Tyr264, Ser265–His272, Ser273–Tyr280, Ser281–His288, Ser289–Tyr296, Ser297–His304, Ser305–Tyr312, and Ser313–His320. Positions Ser25–Tyr233 are 13 X 9 AA repeats of S-P-P-P-P-V-K-[HY]-Y. The interval Ser34–Lys240 is 13 X 7 AA repeats of S-P-P-P-V-Y-K. Positions Ser241–Tyr312 are 5 X 8 AA repeats of S-P-P-P-P-V-H-Y. Residues Ser249–His320 form a 5 X 8 AA repeats of S-P-P-P-V-V-Y-H region. 2 isodityrosine cross-linking regions span residues Tyr329–Lys332 and Tyr363–Lys366. A disordered region spans residues Pro349 to Tyr373.

It belongs to the extensin family. Post-translationally, extensins contain a characteristic repeat of the pentapeptide Ser-Pro(4). For this particular extensin, a typical repeat of Ser-Pro(3) is found. In both cases, the proline residues are hydroxylated and then O-glycosylated (arabinosylation). Synthetised as soluble proteins which become insolubilised in the cell wall through the intermolecular cross-linking of Tyr on adjacent monomers. Isodityrosine (IDT) stabilizes and makes rigid the part of the polypeptide where IDT functional sites are present. In terms of tissue distribution, predominantly expressed in the roots. Not detected in the leaves, nor in flowers or flower buds. Wounding reverses this pattern, turning on the gene in the leaves and repressing it in the roots.

It localises to the secreted. The protein resides in the primary cell wall. Functionally, structural component which strengthens the primary cell wall. This Arabidopsis thaliana (Mouse-ear cress) protein is Extensin-1.